Consider the following 954-residue polypeptide: Glycine dehydrogenase (decarboxylating) (954 aa).

Lysine 704 carries the N6-(pyridoxal phosphate)lysine modification.

Belongs to the GcvP family. In terms of assembly, the glycine cleavage system is composed of four proteins: P, T, L and H. Requires pyridoxal 5'-phosphate as cofactor.

It carries out the reaction N(6)-[(R)-lipoyl]-L-lysyl-[glycine-cleavage complex H protein] + glycine + H(+) = N(6)-[(R)-S(8)-aminomethyldihydrolipoyl]-L-lysyl-[glycine-cleavage complex H protein] + CO2. The glycine cleavage system catalyzes the degradation of glycine. The P protein binds the alpha-amino group of glycine through its pyridoxal phosphate cofactor; CO(2) is released and the remaining methylamine moiety is then transferred to the lipoamide cofactor of the H protein. The polypeptide is Glycine dehydrogenase (decarboxylating) (Rhizobium etli (strain CIAT 652)).